Here is an 855-residue protein sequence, read N- to C-terminus: DNA mismatch repair protein MutS (855 aa).

616–623 (GPNMGGKS) contributes to the ATP binding site.

The protein belongs to the DNA mismatch repair MutS family.

Its function is as follows. This protein is involved in the repair of mismatches in DNA. It is possible that it carries out the mismatch recognition step. This protein has a weak ATPase activity. This is DNA mismatch repair protein MutS from Salmonella paratyphi C (strain RKS4594).